The chain runs to 556 residues: Urocanate hydratase (556 aa).

NAD(+) contacts are provided by residues G52–G53, Q130, G176–G178, E196, R201, N242–A243, Q263–H267, Y273–L274, and Y322. C410 is an active-site residue. G492 lines the NAD(+) pocket.

The protein belongs to the urocanase family. It depends on NAD(+) as a cofactor.

It is found in the cytoplasm. It carries out the reaction 4-imidazolone-5-propanoate = trans-urocanate + H2O. The protein operates within amino-acid degradation; L-histidine degradation into L-glutamate; N-formimidoyl-L-glutamate from L-histidine: step 2/3. Functionally, catalyzes the conversion of urocanate to 4-imidazolone-5-propionate. In Shewanella sediminis (strain HAW-EB3), this protein is Urocanate hydratase.